Consider the following 79-residue polypeptide: uncharacterized protein (79 aa).

The protein localises to the mitochondrion. This is an uncharacterized protein from Marchantia polymorpha (Common liverwort).